A 41-amino-acid chain; its full sequence is Histone H3.2 (41 aa).

Residues M1–R41 are disordered.

The protein belongs to the histone H3 family. In terms of assembly, the nucleosome is a histone octamer containing two molecules each of H2A, H2B, H3 and H4 assembled in one H3-H4 heterotetramer and two H2A-H2B heterodimers. The octamer wraps approximately 147 bp of DNA.

The protein resides in the nucleus. The protein localises to the chromosome. In terms of biological role, core component of nucleosome. Nucleosomes wrap and compact DNA into chromatin, limiting DNA accessibility to the cellular machineries which require DNA as a template. Histones thereby play a central role in transcription regulation, DNA repair, DNA replication and chromosomal stability. DNA accessibility is regulated via a complex set of post-translational modifications of histones, also called histone code, and nucleosome remodeling. The chain is Histone H3.2 from Tetrahymena borealis.